Consider the following 163-residue polypeptide: Urease accessory protein UreE (163 aa).

The interval 144 to 163 (QPEPGAYGGSSAGSHDGHHH) is disordered.

It belongs to the UreE family.

The protein resides in the cytoplasm. In terms of biological role, involved in urease metallocenter assembly. Binds nickel. Probably functions as a nickel donor during metallocenter assembly. This Aliivibrio fischeri (strain ATCC 700601 / ES114) (Vibrio fischeri) protein is Urease accessory protein UreE.